We begin with the raw amino-acid sequence, 265 residues long: Ubiquinone biosynthesis protein COQ4 homolog, mitochondrial (265 aa).

Residues Met-1–Arg-30 constitute a mitochondrion transit peptide. Ser-108 carries the phosphoserine modification. Residues His-163, Asp-164, His-167, and Glu-179 each contribute to the Zn(2+) site.

This sequence belongs to the COQ4 family. In terms of assembly, component of a multi-subunit COQ enzyme complex, composed of at least COQ3, COQ4, COQ5, COQ6, COQ7 and COQ9. It depends on Zn(2+) as a cofactor. As to expression, expressed ubiquitously, but at high levels in liver, lung and pancreas.

It localises to the mitochondrion inner membrane. The catalysed reaction is 4-hydroxy-3-methoxy-5-(all-trans-decaprenyl)benzoate + H(+) = 2-methoxy-6-(all-trans-decaprenyl)phenol + CO2. It participates in cofactor biosynthesis; ubiquinone biosynthesis. Its function is as follows. Lyase that catalyzes the C1-decarboxylation of 4-hydroxy-3-methoxy-5-(all-trans-decaprenyl)benzoic acid into 2-methoxy-6-(all-trans-decaprenyl)phenol during ubiquinone biosynthesis. This Homo sapiens (Human) protein is Ubiquinone biosynthesis protein COQ4 homolog, mitochondrial.